Here is a 20-residue protein sequence, read N- to C-terminus: Superoxide dismutase [Fe] (20 aa).

This sequence belongs to the iron/manganese superoxide dismutase family. Homodimer. The cofactor is Fe cation.

It localises to the periplasm. The enzyme catalyses 2 superoxide + 2 H(+) = H2O2 + O2. Functionally, destroys superoxide anion radicals which are normally produced within the cells and which are toxic to biological systems. This is Superoxide dismutase [Fe] (sodB) from Photobacterium damsela subsp. piscicida (Pasteurella piscicida).